Consider the following 504-residue polypeptide: Immunoglobulin-binding protein EibC (504 aa).

The N-terminal stretch at 1–26 (MSKKFTMTLLSSSLAGLLVMSGGVSA) is a signal peptide. The interval 27–413 (QEEKYTVPYA…IAANTRTLQQ (387 aa)) is surface exposed passenger domain. Topologically, residues 27 to 453 (QEEKYTVPYA…GLFQPYSVGK (427 aa)) are extracellular. Residues 154-280 (DAKASGEFSV…TGTESDKTYG (127 aa)) form a head domain region. The neck stretch occupies residues 281–296 (TRVLGGLSDGTRNSDA). The interval 297–342 (ATVGQLNRKVGGVYDDVKARITVESEKQKKYTDQKTSEVNEKVEAR) is right-handed coiled-coil (RHcc). The saddle domain stretch occupies residues 343–368 (TTVGVDSDGKLTRAEGATKTIAVNDG). The segment at 369-434 (LVALSGRTDR…INENHKEMKR (66 aa)) is left-handed coiled-coil (LHcc). A coiled-coil region spans residues 411-438 (LQQHSARLDSQQRQINENHKEMKRAAAQ). Residues 411–453 (LQQHSARLDSQQRQINENHKEMKRAAAQSAALTGLFQPYSVGK) form an outer membrane translocation of the passenger domain region. The next 4 membrane-spanning stretches (beta stranded) occupy residues 454–464 (FNATAAVGGYS), 467–478 (QALAVGVGYRFN), 481–490 (TAAKAGVAFS), and 494–504 (ASWNVGVNFEF). A translocator domain region spans residues 454–504 (FNATAAVGGYSDQQALAVGVGYRFNEQTAAKAGVAFSDGDASWNVGVNFEF).

It belongs to the autotransporter-2 (AT-2) (TC 1.B.40) family. Eib subfamily. Homotrimer; can probably form mixed heterotrimers in vivo. Will form mixed heterotrimers with EibD; these are correctly located in the outer membrane and bind IgG Fc, although less well than homotrimers. In denaturing gels runs as a band of about 200 kDa. Binds the Fc portion of immunoglobulins; binds more than 1 Fc per subunit.

It is found in the cell surface. The protein localises to the cell outer membrane. Functionally, binds (in a non-immune fashion) to the Fc portion of human IgG and less well to IgA; binding occurs on the cell surface. Confers the ability to survive exposure to human serum exposure. Binds to the Fc portion of human IgG and IgA and to whole mouse antibodies also via Fc. In Escherichia coli, this protein is Immunoglobulin-binding protein EibC.